A 433-amino-acid polypeptide reads, in one-letter code: Homogentisate 1,2-dioxygenase (433 aa).

The active-site Proton acceptor is His-288. His-331 and Glu-337 together coordinate Fe cation. 2 residues coordinate homogentisate: Tyr-346 and His-367. Residue His-367 participates in Fe cation binding.

Belongs to the homogentisate dioxygenase family. As to quaternary structure, hexamer; dimer of trimers. The cofactor is Fe cation.

It carries out the reaction homogentisate + O2 = 4-maleylacetoacetate + H(+). It participates in amino-acid degradation; L-phenylalanine degradation; acetoacetate and fumarate from L-phenylalanine: step 4/6. In terms of biological role, involved in the catabolism of homogentisate (2,5-dihydroxyphenylacetate or 2,5-OH-PhAc), a central intermediate in the degradation of phenylalanine and tyrosine. Catalyzes the oxidative ring cleavage of the aromatic ring of homogentisate to yield maleylacetoacetate. The chain is Homogentisate 1,2-dioxygenase from Pseudomonas putida (strain W619).